Here is a 369-residue protein sequence, read N- to C-terminus: Probable dual-specificity RNA methyltransferase RlmN (369 aa).

Glu108 serves as the catalytic Proton acceptor. A Radical SAM core domain is found at 114 to 352 (YPDRATLCIS…CTVRDTKGQE (239 aa)). Cys121 and Cys357 are joined by a disulfide. 3 residues coordinate [4Fe-4S] cluster: Cys128, Cys132, and Cys135. Residues 178–179 (GE), Ser212, 235–237 (SLH), and Asn314 each bind S-adenosyl-L-methionine. Residue Cys357 is the S-methylcysteine intermediate of the active site.

It belongs to the radical SAM superfamily. RlmN family. It depends on [4Fe-4S] cluster as a cofactor.

The protein resides in the cytoplasm. The enzyme catalyses adenosine(2503) in 23S rRNA + 2 reduced [2Fe-2S]-[ferredoxin] + 2 S-adenosyl-L-methionine = 2-methyladenosine(2503) in 23S rRNA + 5'-deoxyadenosine + L-methionine + 2 oxidized [2Fe-2S]-[ferredoxin] + S-adenosyl-L-homocysteine. The catalysed reaction is adenosine(37) in tRNA + 2 reduced [2Fe-2S]-[ferredoxin] + 2 S-adenosyl-L-methionine = 2-methyladenosine(37) in tRNA + 5'-deoxyadenosine + L-methionine + 2 oxidized [2Fe-2S]-[ferredoxin] + S-adenosyl-L-homocysteine. Specifically methylates position 2 of adenine 2503 in 23S rRNA and position 2 of adenine 37 in tRNAs. The chain is Probable dual-specificity RNA methyltransferase RlmN from Corynebacterium efficiens (strain DSM 44549 / YS-314 / AJ 12310 / JCM 11189 / NBRC 100395).